The primary structure comprises 361 residues: Diacylglycerol O-acyltransferase 2 (361 aa).

The Cytoplasmic segment spans residues 1–42 (MKTIIAAYSGVLRGTGSSLLSAVHDLPSIPWLSKSSVVRHLQ). The helical transmembrane segment at 43-61 (IISVLQWVLSFLILGVACT) threads the bilayer. Topologically, residues 62-65 (AVLV) are lumenal. A helical membrane pass occupies residues 66-85 (YIFCTDLWLIAALYFTWMVL). Residues 86–361 (DWNTPYKGGR…LPDSETLEFI (276 aa)) are Cytoplasmic-facing.

Belongs to the diacylglycerol acyltransferase family.

Its subcellular location is the endoplasmic reticulum membrane. It is found in the lipid droplet. It localises to the cytoplasm. The protein localises to the perinuclear region. The enzyme catalyses an acyl-CoA + a 1,2-diacyl-sn-glycerol = a triacyl-sn-glycerol + CoA. It catalyses the reaction all-trans-retinol + an acyl-CoA = an all-trans-retinyl ester + CoA. It carries out the reaction 2-(9Z-octadecenoyl)-glycerol + (9Z)-octadecenoyl-CoA = 1,2-di-(9Z-octadecenoyl)-sn-glycerol + CoA. The catalysed reaction is 1,2-di-(9Z-octadecenoyl)-sn-glycerol + (9Z)-octadecenoyl-CoA = 1,2,3-tri-(9Z-octadecenoyl)-glycerol + CoA. The enzyme catalyses all-trans-retinol + hexadecanoyl-CoA = all-trans-retinyl hexadecanoate + CoA. It catalyses the reaction 1-O-(9Z-octadecenyl)-glycerol + (9Z)-octadecenoyl-CoA = 1-O-(9Z-octadecyl)-3-(9Z-octadecenoyl)-glycerol + CoA. It carries out the reaction 1-(9Z-octadecenoyl)-glycerol + (9Z)-octadecenoyl-CoA = 1,2-di-(9Z-octadecenoyl)-glycerol + CoA. The catalysed reaction is 1,2-di-(9Z-octadecenoyl)-sn-glycerol + hexadecanoyl-CoA = 1,2-di-(9Z)-octadecenoyl-3-hexadecanoyl-sn-glycerol + CoA. The enzyme catalyses 1,3-di-(9Z-octadecenoyl)-glycerol + (9Z)-octadecenoyl-CoA = 1,2,3-tri-(9Z-octadecenoyl)-glycerol + CoA. It catalyses the reaction 2,3-di-(9Z)-octadecenoyl-sn-glycerol + (9Z)-octadecenoyl-CoA = 1,2,3-tri-(9Z-octadecenoyl)-glycerol + CoA. It carries out the reaction 2-(9Z-octadecenoyl)-glycerol + hexadecanoyl-CoA = 1-hexadecanoyl-2-(9Z-octadecenoyl)-sn-glycerol + CoA. It participates in glycerolipid metabolism; triacylglycerol biosynthesis. Essential acyltransferase that catalyzes the terminal and only committed step in triacylglycerol synthesis by using diacylglycerol and fatty acyl CoA as substrates. Required for synthesis and storage of intracellular triglycerides. Probably plays a central role in cytosolic lipid accumulation. The sequence is that of Diacylglycerol O-acyltransferase 2 (dgat2) from Xenopus laevis (African clawed frog).